The primary structure comprises 274 residues: Large ribosomal subunit protein uL2 (274 aa).

Residues 224–259 (AMNPVDHPHGGGEGRTSGGRHPVTPWGIPTKGYKTR) form a disordered region.

The protein belongs to the universal ribosomal protein uL2 family. As to quaternary structure, part of the 50S ribosomal subunit. Forms a bridge to the 30S subunit in the 70S ribosome.

Functionally, one of the primary rRNA binding proteins. Required for association of the 30S and 50S subunits to form the 70S ribosome, for tRNA binding and peptide bond formation. It has been suggested to have peptidyltransferase activity; this is somewhat controversial. Makes several contacts with the 16S rRNA in the 70S ribosome. The polypeptide is Large ribosomal subunit protein uL2 (Citrifermentans bemidjiense (strain ATCC BAA-1014 / DSM 16622 / JCM 12645 / Bem) (Geobacter bemidjiensis)).